Reading from the N-terminus, the 51-residue chain is Ribosome biogenesis protein Nop10 (51 aa).

This sequence belongs to the NOP10 family.

Its function is as follows. Involved in ribosome biogenesis; more specifically in 18S rRNA pseudouridylation and in cleavage of pre-rRNA. The sequence is that of Ribosome biogenesis protein Nop10 from Nitrosopumilus maritimus (strain SCM1).